Consider the following 610-residue polypeptide: Elongation factor 4 (610 aa).

One can recognise a tr-type G domain in the interval 11-193 (KYIRNFSIVA…QIVTKIPAPA (183 aa)). Residues 23 to 28 (DHGKST) and 140 to 143 (NKID) contribute to the GTP site.

This sequence belongs to the TRAFAC class translation factor GTPase superfamily. Classic translation factor GTPase family. LepA subfamily.

The protein localises to the cell membrane. The enzyme catalyses GTP + H2O = GDP + phosphate + H(+). Functionally, required for accurate and efficient protein synthesis under certain stress conditions. May act as a fidelity factor of the translation reaction, by catalyzing a one-codon backward translocation of tRNAs on improperly translocated ribosomes. Back-translocation proceeds from a post-translocation (POST) complex to a pre-translocation (PRE) complex, thus giving elongation factor G a second chance to translocate the tRNAs correctly. Binds to ribosomes in a GTP-dependent manner. In Levilactobacillus brevis (strain ATCC 367 / BCRC 12310 / CIP 105137 / JCM 1170 / LMG 11437 / NCIMB 947 / NCTC 947) (Lactobacillus brevis), this protein is Elongation factor 4.